The sequence spans 588 residues: Schlafen family member 12-like (588 aa).

The helical transmembrane segment at 566 to 586 (IFLFVCLFRFCLFVCWFVCFF) threads the bilayer.

The protein belongs to the Schlafen family.

The protein localises to the membrane. This is Schlafen family member 12-like (SLFN12L) from Homo sapiens (Human).